The primary structure comprises 178 residues: ATP-dependent protease subunit HslV (178 aa).

Residue T7 is part of the active site. Residues G162, C165, and T168 each contribute to the Na(+) site.

Belongs to the peptidase T1B family. HslV subfamily. As to quaternary structure, a double ring-shaped homohexamer of HslV is capped on each side by a ring-shaped HslU homohexamer. The assembly of the HslU/HslV complex is dependent on binding of ATP.

The protein resides in the cytoplasm. It carries out the reaction ATP-dependent cleavage of peptide bonds with broad specificity.. Its activity is regulated as follows. Allosterically activated by HslU binding. In terms of biological role, protease subunit of a proteasome-like degradation complex believed to be a general protein degrading machinery. The chain is ATP-dependent protease subunit HslV from Janthinobacterium sp. (strain Marseille) (Minibacterium massiliensis).